The primary structure comprises 385 residues: Sesquiterpene alcohol synthase (385 aa).

2 residues coordinate Mg(2+): Asp-123 and Asp-127. The DDXXD motif signature appears at 123-127 (DDISD).

The protein belongs to the terpene synthase family. Mg(2+) serves as cofactor. In terms of tissue distribution, specifically expressed in tissues lining the cuticle of the abdominal sternites of mature males.

The catalysed reaction is (2E,6E)-farnesyl diphosphate + H2O = (1S,6S,7R)-sesquipiperitol + diphosphate. The protein operates within pheromone biosynthesis. Sesquiterpene alcohol synthase that catalyzes the formation of (1S,6S,7R)-sesquipiperitol, a terpene intermediate in murgantiol biosynthesis, a male-released aggregation pheromone. In Murgantia histrionica (Harlequin bug), this protein is Sesquiterpene alcohol synthase.